The sequence spans 142 residues: ATP synthase epsilon chain (142 aa).

It belongs to the ATPase epsilon chain family. F-type ATPases have 2 components, CF(1) - the catalytic core - and CF(0) - the membrane proton channel. CF(1) has five subunits: alpha(3), beta(3), gamma(1), delta(1), epsilon(1). CF(0) has three main subunits: a, b and c.

The protein resides in the cell inner membrane. In terms of biological role, produces ATP from ADP in the presence of a proton gradient across the membrane. This chain is ATP synthase epsilon chain, found in Shewanella loihica (strain ATCC BAA-1088 / PV-4).